We begin with the raw amino-acid sequence, 319 residues long: G-protein coupled receptor 171 (319 aa).

Residues methionine 1–phenylalanine 21 lie on the Extracellular side of the membrane. A glycan (N-linked (GlcNAc...) asparagine) is linked at asparagine 3. A helical transmembrane segment spans residues tyrosine 22 to lysine 42. At asparagine 43–cysteine 48 the chain is on the cytoplasmic side. Residues valine 49–valine 69 traverse the membrane as a helical segment. Residues lysine 70–valine 89 are Extracellular-facing. A helical transmembrane segment spans residues threonine 90 to isoleucine 110. Over aspartate 111–lysine 132 the chain is Cytoplasmic. A helical transmembrane segment spans residues methionine 133–proline 153. Residues isoleucine 154–asparagine 181 are Extracellular-facing. The chain crosses the membrane as a helical span at residues phenylalanine 182–valine 202. Over isoleucine 203 to serine 224 the chain is Cytoplasmic. The chain crosses the membrane as a helical span at residues isoleucine 225–proline 245. Residues tyrosine 246–glutamate 268 lie on the Extracellular side of the membrane. A helical transmembrane segment spans residues alanine 269–serine 289. The Cytoplasmic segment spans residues lysine 290–alanine 319.

It belongs to the G-protein coupled receptor 1 family.

Its subcellular location is the cell membrane. Its function is as follows. G-protein coupled receptor for Big LEN, a 16-amino acid neuropeptide produced from the precursor protein, proSAAS (encoded by PCSK1N). Acts through a G(i)-alpha-mediated pathway in response to bigLEN. Big LEN-GPR171 system plays an important role in regulating feeding and metabolism. Also plays a role in modulating fear and anxiety-like behaviors in the basolateral amygdala. Big LEN-GPR171 modulates the mu-type opioid receptor signaling and antinociception. Acts as a negative regulator T cell function. The sequence is that of G-protein coupled receptor 171 (GPR171) from Bos taurus (Bovine).